The following is a 302-amino-acid chain: Aspartate carbamoyltransferase catalytic subunit (302 aa).

2 residues coordinate carbamoyl phosphate: Arg-53 and Thr-54. Residue Lys-82 participates in L-aspartate binding. Carbamoyl phosphate is bound by residues Arg-103, His-131, and Gln-134. L-aspartate-binding residues include Arg-164 and Arg-223. The carbamoyl phosphate site is built by Leu-260 and Pro-261.

Belongs to the aspartate/ornithine carbamoyltransferase superfamily. ATCase family. In terms of assembly, heterooligomer of catalytic and regulatory chains.

It carries out the reaction carbamoyl phosphate + L-aspartate = N-carbamoyl-L-aspartate + phosphate + H(+). The protein operates within pyrimidine metabolism; UMP biosynthesis via de novo pathway; (S)-dihydroorotate from bicarbonate: step 2/3. Catalyzes the condensation of carbamoyl phosphate and aspartate to form carbamoyl aspartate and inorganic phosphate, the committed step in the de novo pyrimidine nucleotide biosynthesis pathway. The sequence is that of Aspartate carbamoyltransferase catalytic subunit from Methanococcus maripaludis (strain C5 / ATCC BAA-1333).